A 205-amino-acid polypeptide reads, in one-letter code: MSSRKKVMLKVIILGDSGVGKTSLMNQYVNKKFSGSYKATIGADFLTKEVLVDDRLVTMQIWDTAGQERFQSLGVAFYRGADCCVLVYDVNNSKSFEALDSWRDEFLIQASPRDPESFPFVVIGNKIDMEESKRMISSKRAMTFCQSKGNIPYFETSAKEAVNVEQAFEVIARSALAQEEAEEYGGDYTDPINIHDTTERDGCAC.

Residues 17–23 (SGVGKTS), 33–40 (FSGSYKAT), Gly-66, 125–128 (NKID), and 157–159 (SAK) each bind GTP. The Effector region motif lies at 37 to 45 (YKATIGADF). Residues Cys-203 and Cys-205 are each lipidated (S-geranylgeranyl cysteine). Cys-205 is modified (cysteine methyl ester).

The protein belongs to the small GTPase superfamily. Rab family.

With respect to regulation, rab activation is generally mediated by a guanine exchange factor (GEF), while inactivation through hydrolysis of bound GTP is catalyzed by a GTPase activating protein (GAP). Its function is as follows. Ypt/Rab-type GTPases are key regulators of membrane trafficking and intracellular vesicular transport. They act as molecular switches that convert between GTP-bound and GDP-bound states, and regulate virtually all steps of membrane traffic from the formation of the transport vesicle at the donor membrane to its fusion at the target membrane. In the GDP-bound state, Ypt proteins are predominantly cytosolic, solubilized through the interaction with a GDP dissociation inhibitor (GDI). In the GTP-bound state, the proteins are membrane bound and interact with specific effector proteins that select cargo, promote vesicle movement, or verify the correct site of fusion. AvaA functions in vacuolar biogenesis. This chain is Ypt/Rab-type GTPase avaA, found in Emericella nidulans (strain FGSC A4 / ATCC 38163 / CBS 112.46 / NRRL 194 / M139) (Aspergillus nidulans).